Consider the following 398-residue polypeptide: Interleukin-1 receptor type 2 (398 aa).

The first 13 residues, 1 to 13, serve as a signal peptide directing secretion; it reads MLRLYVLVMGVSA. The Extracellular portion of the chain corresponds to 14-343; the sequence is FTLQPAAHTG…FQTLRTTVKE (330 aa). 3 consecutive Ig-like C2-type domains span residues 18 to 124, 134 to 223, and 237 to 349; these read PAAH…IELR, PFIS…ITRS, and PVII…STFS. Intrachain disulfides connect Cys28–Cys116, Cys50–Cys108, and Cys152–Cys207. N-linked (GlcNAc...) asparagine glycans are attached at residues Asn66, Asn72, and Asn112. N-linked (GlcNAc...) asparagine glycosylation is found at Asn219 and Asn277. Residues Cys258 and Cys326 are joined by a disulfide bond. Residues 329-343 are contains proteolytic cleavage site; the sequence is HNTLSFQTLRTTVKE. A helical membrane pass occupies residues 344 to 369; sequence ASSTFSWGIVLAPLSLAFLVLGGIWM. Residues 370-398 are Cytoplasmic-facing; it reads HRRCKHRTGKADGLTVLWPHHQDFQSYPK.

The protein belongs to the interleukin-1 receptor family. As to quaternary structure, associates with IL1RAP to form a non-signaling interleukin-1 receptor complex. In terms of processing, a soluble form (sIL1R2) can also be produced by proteolytic cleavage at the cell surface (shedding) involving a metalloproteinase; hovever, several sIL1R2 forms ranging from 45 and 60 kDa are reported.

It localises to the secreted. The protein resides in the cell membrane. Functionally, non-signaling receptor for IL1A, IL1B and IL1RN. Reduces IL1B activities. Serves as a decoy receptor by competitive binding to IL1B and preventing its binding to IL1R1. Also modulates cellular response through non-signaling association with IL1RAP after binding to IL1B. IL1R2 (membrane and secreted forms) preferentially binds IL1B and poorly IL1A and IL1RN. The secreted IL1R2 recruits secreted IL1RAP with high affinity; this complex formation may be the dominant mechanism for neutralization of IL1B by secreted/soluble receptors. This chain is Interleukin-1 receptor type 2 (IL1R2), found in Homo sapiens (Human).